Here is an 820-residue protein sequence, read N- to C-terminus: DNA mismatch repair protein MutS (820 aa).

618 to 625 (GPNMAGKS) contributes to the ATP binding site.

Belongs to the DNA mismatch repair MutS family.

Its function is as follows. This protein is involved in the repair of mismatches in DNA. It is possible that it carries out the mismatch recognition step. This protein has a weak ATPase activity. The sequence is that of DNA mismatch repair protein MutS from Chlamydia trachomatis serovar A (strain ATCC VR-571B / DSM 19440 / HAR-13).